Reading from the N-terminus, the 460-residue chain is 3-isopropylmalate dehydratase large subunit (460 aa).

3 residues coordinate [4Fe-4S] cluster: cysteine 338, cysteine 398, and cysteine 401.

Belongs to the aconitase/IPM isomerase family. LeuC type 1 subfamily. In terms of assembly, heterodimer of LeuC and LeuD. It depends on [4Fe-4S] cluster as a cofactor.

The enzyme catalyses (2R,3S)-3-isopropylmalate = (2S)-2-isopropylmalate. It participates in amino-acid biosynthesis; L-leucine biosynthesis; L-leucine from 3-methyl-2-oxobutanoate: step 2/4. Its function is as follows. Catalyzes the isomerization between 2-isopropylmalate and 3-isopropylmalate, via the formation of 2-isopropylmaleate. The polypeptide is 3-isopropylmalate dehydratase large subunit (Streptococcus gordonii (strain Challis / ATCC 35105 / BCRC 15272 / CH1 / DL1 / V288)).